A 616-amino-acid polypeptide reads, in one-letter code: Membrane protein insertase YidC (616 aa).

The helical transmembrane segment at 9-29 (ILAVILSGLVLIAWQYFYNVP) threads the bilayer. Positions 37–80 (QQQAQAELQKTTPQPTASATPGATPQSGGAAQPSTPAAGQQAQP) are disordered. Residues 44 to 71 (LQKTTPQPTASATPGATPQSGGAAQPST) are compositionally biased toward polar residues. 4 helical membrane-spanning segments follow: residues 388–408 (FFGN…LLFF), 462–482 (LPVV…FVTI), 520–540 (VFGH…TMWF), and 559–579 (WMPL…VIYW).

It belongs to the OXA1/ALB3/YidC family. Type 1 subfamily. In terms of assembly, interacts with the Sec translocase complex via SecD. Specifically interacts with transmembrane segments of nascent integral membrane proteins during membrane integration.

It is found in the cell inner membrane. In terms of biological role, required for the insertion and/or proper folding and/or complex formation of integral membrane proteins into the membrane. Involved in integration of membrane proteins that insert both dependently and independently of the Sec translocase complex, as well as at least some lipoproteins. Aids folding of multispanning membrane proteins. In Bradyrhizobium diazoefficiens (strain JCM 10833 / BCRC 13528 / IAM 13628 / NBRC 14792 / USDA 110), this protein is Membrane protein insertase YidC.